A 123-amino-acid polypeptide reads, in one-letter code: MPTVNQLIRKPRQANVKRNKVPALQENPQKRGVCTRVYTTTPKKPNSALRKVAKIRLTNGFEVIGYIPGEGHNLQEHSVVMIRGGRVKDLPGVRYHIIRGVLDTQGVKNRKQRRSKYGAKRPK.

D89 carries the post-translational modification 3-methylthioaspartic acid.

The protein belongs to the universal ribosomal protein uS12 family. In terms of assembly, part of the 30S ribosomal subunit. Contacts proteins S8 and S17. May interact with IF1 in the 30S initiation complex.

Functionally, with S4 and S5 plays an important role in translational accuracy. Its function is as follows. Interacts with and stabilizes bases of the 16S rRNA that are involved in tRNA selection in the A site and with the mRNA backbone. Located at the interface of the 30S and 50S subunits, it traverses the body of the 30S subunit contacting proteins on the other side and probably holding the rRNA structure together. The combined cluster of proteins S8, S12 and S17 appears to hold together the shoulder and platform of the 30S subunit. This chain is Small ribosomal subunit protein uS12, found in Rhizobium leguminosarum bv. trifolii (strain WSM2304).